A 244-amino-acid polypeptide reads, in one-letter code: MLIDWFTIVAQIINFLILVFLLNRFLYKPIVKTIKARQQEIENRWQDAEKEKKSAKNEANSYQKKQQELEEKKQEIMIQAQTKADEKYDNLVEEARQDVEQKRKTWDESLEREKAQFFDRFQEKIMQQIYKITGHVLGDLANASLEQQIINQFIHRLENLSEKERENLANSLNTTDNGLIIRSHFEISPESRNRLLSSLQQTHIYQGDNVQFMTNSDLICGIELQASDYKIAWNLKDYVEALEI.

A helical transmembrane segment spans residues 2-22 (LIDWFTIVAQIINFLILVFLL).

The protein belongs to the ATPase B chain family. F-type ATPases have 2 components, F(1) - the catalytic core - and F(0) - the membrane proton channel. F(1) has five subunits: alpha(3), beta(3), gamma(1), delta(1), epsilon(1). F(0) has four main subunits: a(1), b(1), b'(1) and c(10-14). The alpha and beta chains form an alternating ring which encloses part of the gamma chain. F(1) is attached to F(0) by a central stalk formed by the gamma and epsilon chains, while a peripheral stalk is formed by the delta, b and b' chains.

It localises to the cellular thylakoid membrane. Its function is as follows. F(1)F(0) ATP synthase produces ATP from ADP in the presence of a proton or sodium gradient. F-type ATPases consist of two structural domains, F(1) containing the extramembraneous catalytic core and F(0) containing the membrane proton channel, linked together by a central stalk and a peripheral stalk. During catalysis, ATP synthesis in the catalytic domain of F(1) is coupled via a rotary mechanism of the central stalk subunits to proton translocation. Functionally, component of the F(0) channel, it forms part of the peripheral stalk, linking F(1) to F(0). The sequence is that of ATP synthase subunit b 2 from Crocosphaera subtropica (strain ATCC 51142 / BH68) (Cyanothece sp. (strain ATCC 51142)).